Here is a 1091-residue protein sequence, read N- to C-terminus: Rho GTPase-activating protein 7 (1091 aa).

Residues 11–78 enclose the SAM domain; sequence LTQIEAKEAC…LNKCAVMKLE (68 aa). Phosphoserine occurs at positions 86, 89, and 129. Disordered regions lie at residues 120–181, 296–329, 402–439, and 491–552; these read SPKQ…TTPR, RSVSNSTQTSSSSSQSETSSAVSTPSPVTRTRSL, RTGSFHGPGHLSLRRENSSDSPKELKRRNSSSSVSSRM, and SDEG…SGVG. The span at 130-143 shows a compositional bias: polar residues; it reads PDNSRLQSATSRES. Composition is skewed to low complexity over residues 155–166 and 298–324; these read SSIRSLSSTSSS and VSNSTQTSSSSSQSETSSAVSTPSPVT. The interval 274–447 is focal adhesion-targeting (FAT); sequence QLNCVEISAL…RMSIYDNVPG (174 aa). Ser-321 carries the post-translational modification Phosphoserine. Positions 414–425 are enriched in basic and acidic residues; the sequence is LRRENSSDSPKE. Polar residues predominate over residues 499–511; sequence ALDSVSPCPSSPK. The span at 513 to 525 shows a compositional bias: basic and acidic residues; sequence IHLDVDHDRRTPS. A compositionally biased stretch (polar residues) spans 526-535; the sequence is DLDSTGNSLN. A polybasic cluster (PBR) region spans residues 614-636; the sequence is KHGFSWAVPKFMKRIKVPDYKDR. A Rho-GAP domain is found at 641-847; that stretch reads VPLTVNVQRS…HMIAECKKLF (207 aa). Positions 877–1084 constitute an START domain; sequence SNDQPADYRH…RDSFSNQSTE (208 aa).

Interacts with EF1A1, facilitates EF1A1 distribution to the membrane periphery and ruffles upon growth factor stimulation and suppresses cell migration. Interacts with tensin TNS1 (via N-terminus); the interaction is decreased by phosphorylation of TNS1. Interacts with TNS3 and PTEN; in resting cells, interacts with TNS3 (via C2 tensin-type domain) but, following growth factor stimulation, TNS3 and PTEN are phosphorylated which leads to weakened interaction with TNS3 and enhanced interaction with PTEN. Interacts (via C-terminus) with tensin TNS4 (via SH2 domain); the interaction is independent of tyrosine phosphorylation of DLC1.

The protein resides in the cytoplasm. Its subcellular location is the cell junction. It localises to the focal adhesion. The protein localises to the membrane. In terms of biological role, functions as a GTPase-activating protein for the small GTPases RHOA, RHOB, RHOC and CDC42, terminating their downstream signaling. This induces morphological changes and detachment through cytoskeletal reorganization, playing a critical role in biological processes such as cell migration and proliferation. Also functions in vivo as an activator of the phospholipase PLCD1. Active DLC1 increases cell migration velocity but reduces directionality. Required for growth factor-induced epithelial cell migration; in resting cells, interacts with TNS3 while PTEN interacts with the p85 regulatory subunit of the PI3K kinase complex but growth factor stimulation induces phosphorylation of TNS3 and PTEN, causing them to change their binding preference so that PTEN interacts with DLC1 and TNS3 interacts with p85. The PTEN-DLC1 complex translocates to the posterior of migrating cells to activate RHOA while the TNS3-p85 complex translocates to the leading edge of migrating cells to promote RAC1 activation. The polypeptide is Rho GTPase-activating protein 7 (Dlc1) (Rattus norvegicus (Rat)).